Consider the following 222-residue polypeptide: Interleukin-12 subunit alpha (222 aa).

Residues Met-1 to Ala-25 form the signal peptide. Intrachain disulfides connect Cys-40/Cys-113, Cys-67/Cys-199, and Cys-88/Cys-126. Asn-42, Asn-96, Asn-110, and Asn-183 each carry an N-linked (GlcNAc...) asparagine glycan.

This sequence belongs to the IL-6 superfamily. In terms of assembly, heterodimer with IL12B; disulfide-linked. This heterodimer is known as interleukin IL-12. Heterodimer with EBI3/IL27B; not disulfide-linked. This heterodimer is known as interleukin IL-35. Interacts with NBR1; this interaction promotes IL-12 secretion.

The protein resides in the secreted. Its function is as follows. Heterodimerizes with IL12B to form the IL-12 cytokine or with EBI3/IL27B to form the IL-35 cytokine. IL-12 is primarily produced by professional antigen-presenting cells (APCs) such as B-cells and dendritic cells (DCs) as well as macrophages and granulocytes and regulates T-cell and natural killer-cell responses, induces the production of interferon-gamma (IFN-gamma), favors the differentiation of T-helper 1 (Th1) cells and is an important link between innate resistance and adaptive immunity. Mechanistically, exerts its biological effects through a receptor composed of IL12R1 and IL12R2 subunits. Binding to the receptor results in the rapid tyrosine phosphorylation of a number of cellular substrates including the JAK family kinases TYK2 and JAK2. In turn, recruited STAT4 gets phosphorylated and translocates to the nucleus where it regulates cytokine/growth factor responsive genes. As part of IL-35, plays essential roles in maintaining the immune homeostasis of the liver microenvironment and also functions as an immune-suppressive cytokine. Mediates biological events through unconventional receptors composed of IL12RB2 and gp130/IL6ST heterodimers or homodimers. Signaling requires the transcription factors STAT1 and STAT4, which form a unique heterodimer that binds to distinct DNA sites. This Felis catus (Cat) protein is Interleukin-12 subunit alpha (IL12A).